A 221-amino-acid chain; its full sequence is Orotidine 5'-phosphate decarboxylase (221 aa).

Residues D12, K34, 60-69 (DFKVADIPNT), S117, 170-180 (PGVGAQGGKAS), G193, and R194 each bind substrate. The Proton donor role is filled by K62.

It belongs to the OMP decarboxylase family. Type 1 subfamily. In terms of assembly, homodimer.

It carries out the reaction orotidine 5'-phosphate + H(+) = UMP + CO2. Its pathway is pyrimidine metabolism; UMP biosynthesis via de novo pathway; UMP from orotate: step 2/2. Functionally, catalyzes the decarboxylation of orotidine 5'-monophosphate (OMP) to uridine 5'-monophosphate (UMP). The protein is Orotidine 5'-phosphate decarboxylase of Methanosarcina barkeri (strain Fusaro / DSM 804).